The chain runs to 265 residues: 3-methyl-2-oxobutanoate hydroxymethyltransferase (265 aa).

The Mg(2+) site is built by aspartate 43 and aspartate 82. 3-methyl-2-oxobutanoate-binding positions include 43 to 44, aspartate 82, and lysine 111; that span reads DS. Glutamate 113 is a Mg(2+) binding site. Glutamate 180 (proton acceptor) is an active-site residue.

The protein belongs to the PanB family. Homodecamer; pentamer of dimers. Mg(2+) serves as cofactor.

The protein localises to the cytoplasm. It carries out the reaction 3-methyl-2-oxobutanoate + (6R)-5,10-methylene-5,6,7,8-tetrahydrofolate + H2O = 2-dehydropantoate + (6S)-5,6,7,8-tetrahydrofolate. It participates in cofactor biosynthesis; (R)-pantothenate biosynthesis; (R)-pantoate from 3-methyl-2-oxobutanoate: step 1/2. Functionally, catalyzes the reversible reaction in which hydroxymethyl group from 5,10-methylenetetrahydrofolate is transferred onto alpha-ketoisovalerate to form ketopantoate. This Francisella tularensis subsp. holarctica (strain OSU18) protein is 3-methyl-2-oxobutanoate hydroxymethyltransferase.